Reading from the N-terminus, the 347-residue chain is UDP-N-acetylenolpyruvoylglucosamine reductase (347 aa).

Residues 24-195 (FDARARVAAR…VAVTFRLPKA (172 aa)) enclose the FAD-binding PCMH-type domain. The active site involves arginine 171. Serine 247 (proton donor) is an active-site residue. Glutamate 343 is an active-site residue.

This sequence belongs to the MurB family. Requires FAD as cofactor.

Its subcellular location is the cytoplasm. The enzyme catalyses UDP-N-acetyl-alpha-D-muramate + NADP(+) = UDP-N-acetyl-3-O-(1-carboxyvinyl)-alpha-D-glucosamine + NADPH + H(+). The protein operates within cell wall biogenesis; peptidoglycan biosynthesis. Functionally, cell wall formation. This chain is UDP-N-acetylenolpyruvoylglucosamine reductase, found in Burkholderia mallei (strain NCTC 10247).